Consider the following 353-residue polypeptide: Small ribosomal subunit biogenesis GTPase RsgA (353 aa).

Residues 1-17 (MSKNKLSKGQQRRVNAN) show a composition bias toward polar residues. The disordered stretch occupies residues 1 to 25 (MSKNKLSKGQQRRVNANHQRRLKTT). Positions 104–274 (ASVLTRPDFY…VIDSPGVREF (171 aa)) constitute a CP-type G domain. GTP contacts are provided by residues 160–163 (NKID) and 214–222 (GQSGVGKSS). Residues Cys298, Cys303, His305, and Cys311 each coordinate Zn(2+).

It belongs to the TRAFAC class YlqF/YawG GTPase family. RsgA subfamily. In terms of assembly, monomer. Associates with 30S ribosomal subunit, binds 16S rRNA. Zn(2+) is required as a cofactor.

The protein localises to the cytoplasm. One of several proteins that assist in the late maturation steps of the functional core of the 30S ribosomal subunit. Helps release RbfA from mature subunits. May play a role in the assembly of ribosomal proteins into the subunit. Circularly permuted GTPase that catalyzes slow GTP hydrolysis, GTPase activity is stimulated by the 30S ribosomal subunit. The protein is Small ribosomal subunit biogenesis GTPase RsgA of Klebsiella pneumoniae (strain 342).